A 167-amino-acid polypeptide reads, in one-letter code: Small ribosomal subunit protein uS5 (167 aa).

One can recognise an S5 DRBM domain in the interval 12-75 (LQEKLIAVNR…EKARRNMTTI (64 aa)).

The protein belongs to the universal ribosomal protein uS5 family. Part of the 30S ribosomal subunit. Contacts proteins S4 and S8.

Its function is as follows. With S4 and S12 plays an important role in translational accuracy. Functionally, located at the back of the 30S subunit body where it stabilizes the conformation of the head with respect to the body. This Vibrio parahaemolyticus serotype O3:K6 (strain RIMD 2210633) protein is Small ribosomal subunit protein uS5.